The chain runs to 222 residues: Cytochrome b6 (222 aa).

Residues 39–59 form a helical membrane-spanning segment; it reads IFYCLGGITLVCFIIQFATGF. Heme c is bound at residue C42. The heme b site is built by H93 and H107. 3 consecutive transmembrane segments (helical) span residues 97–117, 123–143, and 193–213; these read ASMMVLMMILHVFRVYLTGGF, LTWITGVILAVITVSFGVTGY, and LHTFVLPWFIAVFMLMHFLMI. Heme b contacts are provided by H194 and H209.

It belongs to the cytochrome b family. PetB subfamily. In terms of assembly, the 4 large subunits of the cytochrome b6-f complex are cytochrome b6, subunit IV (17 kDa polypeptide, PetD), cytochrome f and the Rieske protein, while the 4 small subunits are PetG, PetL, PetM and PetN. The complex functions as a dimer. Heme b serves as cofactor. Heme c is required as a cofactor.

It is found in the cellular thylakoid membrane. Functionally, component of the cytochrome b6-f complex, which mediates electron transfer between photosystem II (PSII) and photosystem I (PSI), cyclic electron flow around PSI, and state transitions. This chain is Cytochrome b6, found in Prochlorothrix hollandica.